Reading from the N-terminus, the 222-residue chain is Uracil-DNA glycosylase (222 aa).

Asp-66 acts as the Proton acceptor in catalysis.

This sequence belongs to the uracil-DNA glycosylase (UDG) superfamily. UNG family.

It localises to the cytoplasm. It catalyses the reaction Hydrolyzes single-stranded DNA or mismatched double-stranded DNA and polynucleotides, releasing free uracil.. Its function is as follows. Excises uracil residues from the DNA which can arise as a result of misincorporation of dUMP residues by DNA polymerase or due to deamination of cytosine. This chain is Uracil-DNA glycosylase, found in Porphyromonas gingivalis (strain ATCC 33277 / DSM 20709 / CIP 103683 / JCM 12257 / NCTC 11834 / 2561).